Reading from the N-terminus, the 264-residue chain is Apolipoprotein A-I (264 aa).

The signal sequence occupies residues 1-18 (MRVVVVTLALLFLTGTQA). 2 tandem repeats follow at residues 67–88 (LKLA…EDMA) and 89–110 (PYYK…AELT). The tract at residues 67–264 (LKLADNLDTL…LLDELQKTVA (198 aa)) is 10 X approximate tandem repeats. One copy of the 3; half-length repeat lies at 111–121 (KDLEEVKEKIR). A run of 5 repeats spans residues 122–143 (PFLD…QRLA), 144–165 (PVAE…QKLT), 166–187 (PVAE…KNLA), 188–209 (PYSD…EKGI), and 210–231 (PQAA…EKMT). One copy of the 9; half-length repeat lies at 232 to 242 (PLVQDFKERLT). Residues 243–264 (PYAENLKTRFISLLDELQKTVA) form repeat 10.

This sequence belongs to the apolipoprotein A1/A4/E family. Major protein of plasma HDL, also found in chylomicrons.

It localises to the secreted. Functionally, participates in the reverse transport of cholesterol from tissues to the liver for excretion by promoting cholesterol efflux from tissues and by acting as a cofactor for the lecithin cholesterol acyltransferase (LCAT). The chain is Apolipoprotein A-I (APOA1) from Anas platyrhynchos (Mallard).